Consider the following 313-residue polypeptide: 4-diphosphocytidyl-2-C-methyl-D-erythritol kinase (313 aa).

K10 is a catalytic residue. 95–105 (PVTAGLGGGSS) is a binding site for ATP. The active site involves D136. The tract at residues 289–313 (HPRVSPWRSPRSASSRSTRRSSRPT) is disordered. A compositionally biased stretch (low complexity) spans 292 to 304 (VSPWRSPRSASSR).

This sequence belongs to the GHMP kinase family. IspE subfamily.

The enzyme catalyses 4-CDP-2-C-methyl-D-erythritol + ATP = 4-CDP-2-C-methyl-D-erythritol 2-phosphate + ADP + H(+). It participates in isoprenoid biosynthesis; isopentenyl diphosphate biosynthesis via DXP pathway; isopentenyl diphosphate from 1-deoxy-D-xylulose 5-phosphate: step 3/6. Functionally, catalyzes the phosphorylation of the position 2 hydroxy group of 4-diphosphocytidyl-2C-methyl-D-erythritol. The polypeptide is 4-diphosphocytidyl-2-C-methyl-D-erythritol kinase (Anaeromyxobacter dehalogenans (strain 2CP-1 / ATCC BAA-258)).